A 134-amino-acid polypeptide reads, in one-letter code: Protein NrdI (134 aa).

The protein belongs to the NrdI family.

In terms of biological role, probably involved in ribonucleotide reductase function. The protein is Protein NrdI of Serratia proteamaculans (strain 568).